Consider the following 138-residue polypeptide: UPF0251 protein Dole_1957 (138 aa).

This sequence belongs to the UPF0251 family.

The sequence is that of UPF0251 protein Dole_1957 from Desulfosudis oleivorans (strain DSM 6200 / JCM 39069 / Hxd3) (Desulfococcus oleovorans).